A 454-amino-acid polypeptide reads, in one-letter code: tRNA modification GTPase MnmE (454 aa).

3 residues coordinate (6S)-5-formyl-5,6,7,8-tetrahydrofolate: R23, E80, and K120. A TrmE-type G domain is found at 216–377 (GMKVVIAGRP…LRNHLKQSMG (162 aa)). N226 provides a ligand contact to K(+). GTP is bound by residues 226–231 (NAGKSS), 245–251 (TDIAGTT), 270–273 (DTAG), 335–338 (NKAD), and 358–360 (SAR). Position 230 (S230) interacts with Mg(2+). Residues T245, I247, and T250 each coordinate K(+). T251 is a binding site for Mg(2+). K454 contacts (6S)-5-formyl-5,6,7,8-tetrahydrofolate.

This sequence belongs to the TRAFAC class TrmE-Era-EngA-EngB-Septin-like GTPase superfamily. TrmE GTPase family. Homodimer. Heterotetramer of two MnmE and two MnmG subunits. K(+) is required as a cofactor.

Its subcellular location is the cytoplasm. Its function is as follows. Exhibits a very high intrinsic GTPase hydrolysis rate. Involved in the addition of a carboxymethylaminomethyl (cmnm) group at the wobble position (U34) of certain tRNAs, forming tRNA-cmnm(5)s(2)U34. The protein is tRNA modification GTPase MnmE of Escherichia coli O139:H28 (strain E24377A / ETEC).